Here is a 292-residue protein sequence, read N- to C-terminus: MNKDIATPIRTKEILKKYGFSFKKSLGQNFLIDTNILNRIVDHAEVTEKTGVIEIGPGIGALTEQLAKRAKKVVAFEIDQRLLPILKDTLSPYENVTVIHQDVLKADVKSVIEEQFQDCDEIMVVANLPYYVTTPIIMKLLEEHLPLKGIVVMLQKEVAERMAADPSSKEYGSLSIAVQFYTEAKTVMIVPKTVFVPQPNVDSAVIRLILRDGPAVDVENESFFFQLIKASFAQRRKTLLNNLVNNLPEGKAQKSTIEQVLEETNIDGKRRGESLSIEEFAALSNGLYKALF.

The S-adenosyl-L-methionine site is built by Asn29, Leu31, Gly56, Glu77, Asp102, and Asn127.

Belongs to the class I-like SAM-binding methyltransferase superfamily. rRNA adenine N(6)-methyltransferase family. RsmA subfamily.

The protein resides in the cytoplasm. The catalysed reaction is adenosine(1518)/adenosine(1519) in 16S rRNA + 4 S-adenosyl-L-methionine = N(6)-dimethyladenosine(1518)/N(6)-dimethyladenosine(1519) in 16S rRNA + 4 S-adenosyl-L-homocysteine + 4 H(+). Its function is as follows. Specifically dimethylates two adjacent adenosines (A1518 and A1519) in the loop of a conserved hairpin near the 3'-end of 16S rRNA in the 30S particle. May play a critical role in biogenesis of 30S subunits. This Bacillus subtilis (strain 168) protein is Ribosomal RNA small subunit methyltransferase A.